A 146-amino-acid chain; its full sequence is Hemoglobin subunit beta (146 aa).

The 145-residue stretch at 2–146 (FLTAEEKGLV…VANALAHKYH (145 aa)) folds into the Globin domain. Phosphoserine is present on Ser44. Lys59 is subject to N6-acetyllysine. His63 is a binding site for heme b. Lys82 carries the post-translational modification N6-acetyllysine. Heme b is bound at residue His92. Cys93 is subject to S-nitrosocysteine. The residue at position 144 (Lys144) is an N6-acetyllysine.

It belongs to the globin family. Heterotetramer of two alpha chains and two beta chains. Red blood cells.

Involved in oxygen transport from the lung to the various peripheral tissues. The polypeptide is Hemoglobin subunit beta (HBB) (Lynx lynx (Eurasian lynx)).